Consider the following 87-residue polypeptide: Small ribosomal subunit protein bS20 (87 aa).

Over residues 1–11 (MANIKSAKKRA) the composition is skewed to basic residues. The disordered stretch occupies residues 1–27 (MANIKSAKKRAVQSEKRRQHNASQRSM).

The protein belongs to the bacterial ribosomal protein bS20 family.

Binds directly to 16S ribosomal RNA. The protein is Small ribosomal subunit protein bS20 of Haemophilus influenzae (strain PittEE).